The chain runs to 120 residues: Ribosome-binding factor A (120 aa).

It belongs to the RbfA family. Monomer. Binds 30S ribosomal subunits, but not 50S ribosomal subunits or 70S ribosomes.

The protein localises to the cytoplasm. In terms of biological role, one of several proteins that assist in the late maturation steps of the functional core of the 30S ribosomal subunit. Associates with free 30S ribosomal subunits (but not with 30S subunits that are part of 70S ribosomes or polysomes). Required for efficient processing of 16S rRNA. May interact with the 5'-terminal helix region of 16S rRNA. The chain is Ribosome-binding factor A from Clostridium botulinum (strain 657 / Type Ba4).